The primary structure comprises 337 residues: F420-dependent glucose-6-phosphate dehydrogenase (337 aa).

Asp-40 is a coenzyme F420-(gamma-Glu)n binding site. Catalysis depends on His-41, which acts as the Proton donor. Coenzyme F420-(gamma-Glu)n contacts are provided by residues Thr-77 and 108 to 109 (TG). Glu-110 (proton acceptor) is an active-site residue. Residues Asn-113, 178–179 (GG), and 181–182 (VV) contribute to the coenzyme F420-(gamma-Glu)n site. Residues Thr-196, Lys-199, Lys-260, and Arg-284 each coordinate substrate.

The protein belongs to the F420-dependent glucose-6-phosphate dehydrogenase family. As to quaternary structure, homodimer.

It carries out the reaction oxidized coenzyme F420-(gamma-L-Glu)(n) + D-glucose 6-phosphate + H(+) = 6-phospho-D-glucono-1,5-lactone + reduced coenzyme F420-(gamma-L-Glu)(n). Catalyzes the coenzyme F420-dependent oxidation of glucose 6-phosphate (G6P) to 6-phosphogluconolactone. The chain is F420-dependent glucose-6-phosphate dehydrogenase from Rhodococcus hoagii (strain 103S) (Rhodococcus equi).